Here is a 105-residue protein sequence, read N- to C-terminus: Small ribosomal subunit protein uS10 (105 aa).

Belongs to the universal ribosomal protein uS10 family. Part of the 30S ribosomal subunit.

Involved in the binding of tRNA to the ribosomes. The protein is Small ribosomal subunit protein uS10 of Rickettsia peacockii (strain Rustic).